Consider the following 524-residue polypeptide: Xanthotoxin 5-hydroxylase CYP82C4 (524 aa).

Residues 1-21 (MDTSLFSLFVPILVFVFIALF) traverse the membrane as a helical segment. A heme-binding site is contributed by Cys-463.

The protein belongs to the cytochrome P450 family. Requires heme as cofactor. Expressed in both primary and lateral roots under iron-deficient conditions, except in apical root zones, and mostly in the root epidermal layer.

It localises to the membrane. The enzyme catalyses fraxetin + reduced [NADPH--hemoprotein reductase] + O2 = sideretin (reduced form) + oxidized [NADPH--hemoprotein reductase] + H2O + H(+). It catalyses the reaction xanthotoxin + reduced [NADPH--hemoprotein reductase] + O2 = 5-hydroxyxanthotoxin + oxidized [NADPH--hemoprotein reductase] + H2O + 2 H(+). Its pathway is phenylpropanoid metabolism. Functionally, can hydroxylate xanthotoxin (8-methoxypsoralen) to form 5-hydroxyxanthotoxin (5-hydroxy-8-methoxypsoralen) in vivo and in vitro. Involved in the early iron deficiency response, possibly through an IDE1-like mediated pathway. Involved in the pathway of sideretin biosynthesis from feruloyl CoA, a redox-active catecholic metabolite exuded by roots in response to iron deficiency in order to facilitate the uptake of iron; this pathway consists in the successive conversion from feruloyl CoA to scopoletin, from scopoletin to fraxetin and from fraxetin to sideretin. Catalyzes the biosynthesis of sideretin via fraxetin hydroxylation. The sequence is that of Xanthotoxin 5-hydroxylase CYP82C4 from Arabidopsis thaliana (Mouse-ear cress).